The following is a 514-amino-acid chain: ATP synthase subunit alpha (514 aa).

170-177 is an ATP binding site; it reads GDRQTGKT.

Belongs to the ATPase alpha/beta chains family. As to quaternary structure, F-type ATPases have 2 components, CF(1) - the catalytic core - and CF(0) - the membrane proton channel. CF(1) has five subunits: alpha(3), beta(3), gamma(1), delta(1), epsilon(1). CF(0) has three main subunits: a(1), b(2) and c(9-12). The alpha and beta chains form an alternating ring which encloses part of the gamma chain. CF(1) is attached to CF(0) by a central stalk formed by the gamma and epsilon chains, while a peripheral stalk is formed by the delta and b chains.

The protein localises to the cell inner membrane. The catalysed reaction is ATP + H2O + 4 H(+)(in) = ADP + phosphate + 5 H(+)(out). Produces ATP from ADP in the presence of a proton gradient across the membrane. The alpha chain is a regulatory subunit. The sequence is that of ATP synthase subunit alpha from Psychrobacter sp. (strain PRwf-1).